A 606-amino-acid chain; its full sequence is Leucine-rich repeat and immunoglobulin-like domain-containing nogo receptor-interacting protein 2 (606 aa).

The first 27 residues, 1 to 27, serve as a signal peptide directing secretion; the sequence is MLHTAIPCWQPFLGLAVVLLLMGSTIG. The LRRNT domain occupies 28 to 57; that stretch reads CPARCECSAQNKSVSCHRRRLLAIPEGIPI. The Extracellular segment spans residues 28–545; that stretch reads CPARCECSAQ…LDLKTILVST (518 aa). An N-linked (GlcNAc...) asparagine glycan is attached at Asn-38. LRR repeat units lie at residues 58–79, 82–103, 106–127, 130–151, 154–175, 178–199, 202–223, 226–247, 250–271, 274–295, 298–319, and 322–343; these read ETKILDLSKNRLKSINPEEFIS, LLEEIDLSDNIIANVEPGAFNN, NLRSLRLKGNRLKLVPLGVFTG, NLTKLDISENKIVILLDYMFQD, NLKSLEVGDNDLVYISHRAFSG, SLEQLTLEKCNLTAVPTEALSH, SLIALHLKHLNINNMPVYAFKR, HLKNLEIDYWPLLDLMPANSLY, NLTSLSITNTNLSTVPFLAFKH, YLTHLNLSYNPISTIEAGMFSD, RLQELHIVGAQLRTIEPHSFQG, and FLRVLNVSQNLLETLEENVFSS. An N-linked (GlcNAc...) asparagine glycan is attached at Asn-130. Asn-188 is a glycosylation site (N-linked (GlcNAc...) asparagine). 3 N-linked (GlcNAc...) asparagine glycosylation sites follow: Asn-250, Asn-260, and Asn-279. N-linked (GlcNAc...) asparagine glycosylation is present at Asn-327. Positions 355 to 409 constitute an LRRCT domain; sequence NPLACDCRLLWLLQRQPNLQFGGQQPMCAGPDTIRERSFKDFHSTALSFYFTCKK. The cysteines at positions 432 and 483 are disulfide-linked. Asn-491, Asn-522, and Asn-527 each carry an N-linked (GlcNAc...) asparagine glycan. A helical transmembrane segment spans residues 546–566; it reads AMGCFTFLGVVLFCFLLLFVW. Topologically, residues 567–606 are cytoplasmic; the sequence is SRGKGKHKNSIDLEYVPRKNNGAVVEGEVAGPRRFNMKMI.

The protein localises to the membrane. The protein is Leucine-rich repeat and immunoglobulin-like domain-containing nogo receptor-interacting protein 2 (Lingo2) of Mus musculus (Mouse).